We begin with the raw amino-acid sequence, 419 residues long: Histidine--tRNA ligase (419 aa).

Belongs to the class-II aminoacyl-tRNA synthetase family. Homodimer.

The protein localises to the cytoplasm. The catalysed reaction is tRNA(His) + L-histidine + ATP = L-histidyl-tRNA(His) + AMP + diphosphate + H(+). This is Histidine--tRNA ligase from Syntrophotalea carbinolica (strain DSM 2380 / NBRC 103641 / GraBd1) (Pelobacter carbinolicus).